Reading from the N-terminus, the 121-residue chain is Splicing factor 3B subunit 6 (121 aa).

The interval 12-25 (EVNRLLYVRNLPYK) is interaction with pre-mRNA branch site. The RRM domain occupies 15-90 (RLLYVRNLPY…RYLVVLYYQS (76 aa)).

Belongs to the SF3B6 family. In terms of assembly, component of splicing factor SF3B complex. Component of the U11/U12 snRNPs that are part of the U12-type spliceosome.

It is found in the nucleus. In terms of biological role, involved in pre-mRNA splicing as a component of the splicing factor SF3B complex. SF3B complex is required for 'A' complex assembly formed by the stable binding of U2 snRNP to the branchpoint sequence (BPS) in pre-mRNA. Directly contacts the pre-mRNA branch site adenosine for the first catalytic step of splicing. Enters the spliceosome and associates with the pre-mRNA branch site as part of the 17S U2 or, in the case of the minor spliceosome, as part of the 18S U11/U12 snRNP complex, and thus may facilitate the interaction of these snRNP with the branch sites of U2 and U12 respectively. The protein is Splicing factor 3B subunit 6 of Drosophila melanogaster (Fruit fly).